A 268-amino-acid chain; its full sequence is AB hydrolase superfamily protein YisY (268 aa).

The region spanning 23–254 is the AB hydrolase-1 domain; it reads PIIFLHGWPL…NSGHGAFYEE (232 aa). Catalysis depends on residues serine 96, aspartate 220, and histidine 248.

The protein belongs to the AB hydrolase superfamily.

This chain is AB hydrolase superfamily protein YisY (yisY), found in Bacillus subtilis (strain 168).